The primary structure comprises 1024 residues: Beta-galactosidase (1024 aa).

Residues Asn-103 and Asp-202 each coordinate substrate. A Na(+)-binding site is contributed by Asp-202. Mg(2+) contacts are provided by Glu-417, His-419, and Glu-462. Substrate is bound by residues Glu-462 and Glu-538 to His-541. The active-site Proton donor is Glu-462. Glu-538 serves as the catalytic Nucleophile. Asn-598 is a Mg(2+) binding site. The Na(+) site is built by Phe-602 and Asn-605. Asn-605 and Trp-1000 together coordinate substrate.

It belongs to the glycosyl hydrolase 2 family. Homotetramer. Mg(2+) is required as a cofactor. It depends on Na(+) as a cofactor.

It catalyses the reaction Hydrolysis of terminal non-reducing beta-D-galactose residues in beta-D-galactosides.. The polypeptide is Beta-galactosidase (Klebsiella pneumoniae).